We begin with the raw amino-acid sequence, 53 residues long: UPF0391 membrane protein Meso_3392 (53 aa).

The next 2 membrane-spanning stretches (helical) occupy residues 4 to 24 (WILI…HSLA) and 33 to 53 (ILIA…IAIA).

Belongs to the UPF0391 family.

It localises to the cell membrane. The chain is UPF0391 membrane protein Meso_3392 from Chelativorans sp. (strain BNC1).